The chain runs to 150 residues: MPEILDKVDRRLLEELKNNARENIATLSKKLGIPRTTVHYRIKRLVEEGIIEKFTIKPNYKKLNLGTTAFILIRYDPDSGLTQREVAEQIARIPGVYEVHLVAGEWDLLLKVRASNAEEIGRIVIDKLREIRGVGQTVTMVSFVTVKEEI.

The HTH asnC-type domain occupies Leu-5–Gly-66. Residues Ile-24–Lys-43 constitute a DNA-binding region (H-T-H motif).

This is an uncharacterized protein from Pyrococcus horikoshii (strain ATCC 700860 / DSM 12428 / JCM 9974 / NBRC 100139 / OT-3).